The primary structure comprises 932 residues: Isoleucine--tRNA ligase (932 aa).

The short motif at 58-68 (PYANGDIHIGH) is the 'HIGH' region element. Glu570 is a binding site for L-isoleucyl-5'-AMP. The short motif at 611–615 (KMSKS) is the 'KMSKS' region element. Lys614 contacts ATP. The Zn(2+) site is built by Cys895, Cys898, Cys915, and Cys918.

It belongs to the class-I aminoacyl-tRNA synthetase family. IleS type 1 subfamily. Monomer. Zn(2+) is required as a cofactor.

It is found in the cytoplasm. The catalysed reaction is tRNA(Ile) + L-isoleucine + ATP = L-isoleucyl-tRNA(Ile) + AMP + diphosphate. Functionally, catalyzes the attachment of isoleucine to tRNA(Ile). As IleRS can inadvertently accommodate and process structurally similar amino acids such as valine, to avoid such errors it has two additional distinct tRNA(Ile)-dependent editing activities. One activity is designated as 'pretransfer' editing and involves the hydrolysis of activated Val-AMP. The other activity is designated 'posttransfer' editing and involves deacylation of mischarged Val-tRNA(Ile). The chain is Isoleucine--tRNA ligase from Dechloromonas aromatica (strain RCB).